Consider the following 373-residue polypeptide: Arfaptin-1 (373 aa).

The tract at residues 1 to 47 (MAQESPKNSAAEIPVTSNGEVDDAHEHGYNRDLKHSLPSGLGLSETQ) is disordered. N-acetylalanine is present on Ala2. At Ser5 the chain carries Phosphoserine. Basic and acidic residues predominate over residues 22–35 (DDAHEHGYNRDLKH). Residues Ser36, Ser39, Ser69, Ser79, and Ser132 each carry the phosphoserine modification. In terms of domain architecture, AH spans 153 to 353 (TVDLELEAQI…NQKQLELTLK (201 aa)). Thr361 carries the phosphothreonine modification.

As to quaternary structure, forms homodimers or heterodimers with ARFIP2. Interacts with non-myristoylated GTP-bound ARF3, but not to GDP-bound ARF3. Interacts with ARF1. Binds with lower affinity to ARF5 and with very little affinity to ARF6. Interacts with ARL1. Interacts with ATG9A. In terms of processing, phosphorylated by PRKD1; phosphorylation delocalizes ARFIP1 from the Golgi and disrupts its ability to inhibit the activity of ADP-ribosylation factor, an important component of the vesicle scission machinery.

It localises to the golgi apparatus. It is found in the trans-Golgi network membrane. Plays a role in controlling biogenesis of secretory granules at the trans-Golgi network. Mechanistically, binds ARF-GTP at the neck of a growing secretory granule precursor and forms a protective scaffold. Once the granule precursor has been completely loaded, active PRKD1 phosphorylates ARFIP1 and releases it from ARFs. In turn, ARFs induce fission. Through this mechanism, ensures proper secretory granule formation at the Golgi of pancreatic beta cells. The polypeptide is Arfaptin-1 (Mus musculus (Mouse)).